The chain runs to 136 residues: Large ribosomal subunit protein uL16 (136 aa).

It belongs to the universal ribosomal protein uL16 family. In terms of assembly, part of the 50S ribosomal subunit.

In terms of biological role, binds 23S rRNA and is also seen to make contacts with the A and possibly P site tRNAs. The chain is Large ribosomal subunit protein uL16 from Shewanella pealeana (strain ATCC 700345 / ANG-SQ1).